We begin with the raw amino-acid sequence, 242 residues long: Small ribosomal subunit protein uS2 (242 aa).

Belongs to the universal ribosomal protein uS2 family.

This chain is Small ribosomal subunit protein uS2, found in Pseudoalteromonas translucida (strain TAC 125).